The chain runs to 112 residues: cAMP-regulated phosphoprotein 19 (112 aa).

An N-acetylmethionine modification is found at Met1. Residues 1 to 11 (MSAEVPEAASA) show a composition bias toward low complexity. Residues 1 to 49 (MSAEVPEAASAEEQKEMEDKVTSPEKAEEAKLKARYPHLGQKPGGSDFL) are disordered. The residue at position 2 (Ser2) is an N-acetylserine. Phosphoserine occurs at positions 2 and 23. Over residues 12 to 32 (EEQKEMEDKVTSPEKAEEAKL) the composition is skewed to basic and acidic residues. Phosphoserine; by GWL is present on residues Ser62 and Ser104. The segment at 72–112 (MKNKQLPTATPDKTEVTGDHIPTPQDLPQRKPSLVASKLAG) is disordered. The residue at position 104 (Ser104) is a Phosphoserine; by PKA. Lys109 carries the N6-acetyllysine modification.

Interacts (when phosphorylated at Ser-62) with PPP2R2D. Interacts with SNCA. Interacts with PPP2R2A; the interaction is direct and this interaction inhibits PP2A activity. In terms of processing, phosphorylation at Ser-62 by MASTL/GWL during mitosis is essential for interaction with PPP2R2D (PR55-delta) and subsequent inactivation of PP2A. Phosphorylated by PKA. Isoform ARPP-19 is found in all brain regions and also present in non-neuronal tissues. Isoform ARPP-16 is enriched in the caudate nucleus, found in low levels in cerebral cortex.

Its subcellular location is the cytoplasm. Its function is as follows. Protein phosphatase inhibitor that specifically inhibits protein phosphatase 2A (PP2A) during mitosis. Inhibition of PP2A is enhanced when ARPP19 is phosphorylated. When phosphorylated at Ser-62 during mitosis, specifically interacts with PPP2R2D (PR55-delta) and inhibits its activity, leading to inactivation of PP2A, an essential condition to keep cyclin-B1-CDK1 activity high during M phase. May indirectly enhance GAP-43 expression. This is cAMP-regulated phosphoprotein 19 (ARPP19) from Bos taurus (Bovine).